The sequence spans 353 residues: MSKGTVALAMSGGVDSSVSAYILKERGYDVIGIYMDLWRDEREEYCNKSAAEDARRVAEKLDIPFHVINIEKKFKNNVIDYFIDEYLSGRTPNPCVACNKTIKFEAFFNAAKEFGADFMATGHYCKIEERNGRKVIVKAEDDKKDQTYMMYNLKQYQLERTIMPCGEYKKDHIREIAESIGLDVYNKKDSQEICFIPDNDHGGFIKRNYKRKISEGNFVDKEGNIIGKHKGIIYYTIGQRKGLGIALGKPAYVIDINPITNEVVIGEEEDIFRTELIAKDVNFIPFDKLEKPMELEAKVRYSAKPSKATIIPLENNKVKVVFQNKQRAITKGQSVVFYDKDILAGGGIIEGIV.

ATP contacts are provided by residues 9-16 and methionine 35; that span reads AMSGGVDS. Cysteine 98 serves as the catalytic Nucleophile. An intrachain disulfide couples cysteine 98 to cysteine 194. An ATP-binding site is contributed by glycine 122. Residues 144 to 146 are interaction with tRNA; sequence KDQ. Catalysis depends on cysteine 194, which acts as the Cysteine persulfide intermediate. The tract at residues 300–301 is interaction with tRNA; that stretch reads RY.

Belongs to the MnmA/TRMU family.

It is found in the cytoplasm. It carries out the reaction S-sulfanyl-L-cysteinyl-[protein] + uridine(34) in tRNA + AH2 + ATP = 2-thiouridine(34) in tRNA + L-cysteinyl-[protein] + A + AMP + diphosphate + H(+). Its function is as follows. Catalyzes the 2-thiolation of uridine at the wobble position (U34) of tRNA, leading to the formation of s(2)U34. This Clostridium botulinum (strain Langeland / NCTC 10281 / Type F) protein is tRNA-specific 2-thiouridylase MnmA 2.